Here is a 350-residue protein sequence, read N- to C-terminus: Protein-glutamate methylesterase/protein-glutamine glutaminase (350 aa).

A Response regulatory domain is found at 5–122 (TVLCVDDSAL…REGMLAYSEL (118 aa)). At aspartate 56 the chain carries 4-aspartylphosphate. A CheB-type methylesterase domain is found at 153–345 (LLSSEKLIAV…KRMLAKISSG (193 aa)). Residues serine 165, histidine 191, and aspartate 287 contribute to the active site.

It belongs to the CheB family. In terms of processing, phosphorylated by CheA. Phosphorylation of the N-terminal regulatory domain activates the methylesterase activity.

It localises to the cytoplasm. The enzyme catalyses [protein]-L-glutamate 5-O-methyl ester + H2O = L-glutamyl-[protein] + methanol + H(+). The catalysed reaction is L-glutaminyl-[protein] + H2O = L-glutamyl-[protein] + NH4(+). In terms of biological role, involved in chemotaxis. Part of a chemotaxis signal transduction system that modulates chemotaxis in response to various stimuli. Catalyzes the demethylation of specific methylglutamate residues introduced into the chemoreceptors (methyl-accepting chemotaxis proteins or MCP) by CheR. Also mediates the irreversible deamidation of specific glutamine residues to glutamic acid. The protein is Protein-glutamate methylesterase/protein-glutamine glutaminase of Photorhabdus laumondii subsp. laumondii (strain DSM 15139 / CIP 105565 / TT01) (Photorhabdus luminescens subsp. laumondii).